The primary structure comprises 595 residues: Guanylate-binding protein 3 (595 aa).

A GTPase domain (Globular) region spans residues 1–309 (MAPEIHMTGP…NAISRGDLPC (309 aa)). The GB1/RHD3-type G domain maps to 35–276 (TQPVVVVAIV…FCSYIFSNSK (242 aa)). Residues 45–52 (GLYRTGKS), 67–69 (LGS), and 97–101 (DTEGL) each bind GTP. A coiled-coil region spans residues 482–595 (EKEKEIEVEC…KRYMSHKLKI (114 aa)).

It belongs to the TRAFAC class dynamin-like GTPase superfamily. GB1/RHD3 GTPase family. GB1 subfamily. As to quaternary structure, heterodimer with other family members, including GBP1, GBP2 and GBP5. Dimerization regulates subcellular location.

The protein localises to the cytoplasm. It is found in the perinuclear region. It localises to the golgi apparatus membrane. The enzyme catalyses GTP + H2O = GDP + phosphate + H(+). In terms of biological role, interferon (IFN)-inducible GTPase that plays important roles in innate immunity against a diverse range of bacterial, viral and protozoan pathogens. Hydrolyzes GTP very efficiently; GDP rather than GMP is the major reaction product. Following infection, recruited to the pathogen-containing vacuoles or vacuole-escaped bacteria and acts as a positive regulator of inflammasome assembly by promoting the release of inflammasome ligands from bacteria. Acts by promoting lysis of pathogen-containing vacuoles, releasing pathogens into the cytosol. Following pathogen release in the cytosol, promotes recruitment of proteins that mediate bacterial cytolysis: this liberates ligands that are detected by inflammasomes, such as lipopolysaccharide (LPS) that activates the non-canonical CASP4/CASP11 inflammasome or double-stranded DNA (dsDNA) that activates the AIM2 inflammasome. Exhibits antiviral activity against influenza virus. Its function is as follows. Shows the most prominent antiviral activity in epithelial cells. This Homo sapiens (Human) protein is Guanylate-binding protein 3 (GBP3).